The following is a 679-amino-acid chain: Stress-70 protein, mitochondrial (679 aa).

Residues 1–46 constitute a mitochondrion transit peptide; that stretch reads MISASRAAVSRFVGTAASRGPTAARHQDGWNGLSHEAFRIVSRRDY. The tract at residues 1–432 is interaction with NFS1; it reads MISASRAAVS…IQGGVLAGDV (432 aa). Residues threonine 63 and asparagine 64 each contribute to the ADP site. A nucleotide-binding domain (NBD) region spans residues 63-431; sequence TNSCVAVMEG…AIQGGVLAGD (369 aa). At lysine 76 the chain carries N6-acetyllysine. Position 87 is a phosphothreonine (threonine 87). An N6-acetyllysine; alternate mark is found at lysine 135 and lysine 138. Lysine 135 and lysine 138 each carry N6-succinyllysine; alternate. Position 143 is an N6-acetyllysine (lysine 143). Residue lysine 206 is modified to N6-acetyllysine; alternate. Lysine 206 bears the N6-succinyllysine; alternate mark. At lysine 206 the chain carries N6-malonyllysine; alternate. N6-acetyllysine is present on residues lysine 234 and lysine 288. Position 300 is an N6-acetyllysine; alternate (lysine 300). Lysine 300 bears the N6-succinyllysine; alternate mark. Residues glutamate 313, lysine 316, and serine 320 each contribute to the ADP site. Lysine 368 is subject to N6-succinyllysine. Residues glycine 388 and arginine 391 each contribute to the ADP site. Position 394 is an N6-succinyllysine (lysine 394). Serine 408 is modified (phosphoserine). The tract at residues 432-441 is interdomain linker; that stretch reads VTDVLLLDVT. The interval 432-679 is interaction with FXN and ISCU; that stretch reads VTDVLLLDVT…QKDNQKEEKQ (248 aa). Residues 442–679 form a substrate-binding domain (SBD) region; the sequence is PLSLGIETLG…QKDNQKEEKQ (238 aa). Arginine 513 carries the post-translational modification Omega-N-methylarginine. N6-acetyllysine; alternate is present on residues lysine 567 and lysine 600. An N6-succinyllysine; alternate mark is found at lysine 567 and lysine 600. Lysine 610 carries the N6-succinyllysine modification. At lysine 612 the chain carries N6-acetyllysine. Lysine 646 bears the N6-acetyllysine; alternate mark. N6-succinyllysine; alternate is present on lysine 646. The segment at 656–679 is disordered; that stretch reads ASEREGSGSSGTGEQKDNQKEEKQ. The span at 669 to 679 shows a compositional bias: basic and acidic residues; that stretch reads EQKDNQKEEKQ.

Belongs to the heat shock protein 70 family. In terms of assembly, interacts strongly with the intermediate form of FXN and weakly with its mature form. Interacts with HSCB. Associates with the mitochondrial contact site and cristae organizing system (MICOS) complex, composed of at least MICOS10/MIC10, CHCHD3/MIC19, CHCHD6/MIC25, APOOL/MIC27, IMMT/MIC60, APOO/MIC23/MIC26 and QIL1/MIC13. This complex was also known under the names MINOS or MitOS complex. The MICOS complex associates with mitochondrial outer membrane proteins SAMM50, MTX1, MTX2 and DNAJC11, mitochondrial inner membrane protein TMEM11 and with HSPA9. Interacts with DNLZ, the interaction is required to prevent self-aggregation. Interacts with TESPA1. Interacts with PDPN. Interacts with NFU1, NFS1 and ISCU. Interacts with TP53; the interaction promotes TP53 degradation. Interacts (via SBD domain) with UBXN2A; the interaction with UBXN2A inhibits HSPA9/MOT-2 interaction with and degradation of TP53, thereby promotes TP53 translocation to the nucleus. Interacts with ITPR1 AND VDAC1; this interaction couples ITPR1 to VDAC1. Component of the TIM23 mitochondrial inner membrane pre-sequence translocase complex.

The protein localises to the mitochondrion. It localises to the nucleus. Its subcellular location is the nucleolus. It is found in the cytoplasm. The protein resides in the mitochondrion matrix. The catalysed reaction is ATP + H2O = ADP + phosphate + H(+). The chaperone activity is regulated by ATP-induced allosteric coupling of the nucleotide-binding (NBD) and substrate-binding (SBD) domains. ATP binding in the NBD leads to a conformational change in the NBD, which is transferred through the interdomain linker (IDL) to the substrate-binding domain (SBD). This elicits a reduced substrate affinity and a faster substrate exchange rate. Upon hydrolysis of ATP to ADP, the protein undergoes a conformational change that increases its affinity for substrate proteins. It cycles through repeated phases of ATP hydrolysis and nucleotide exchange, facilitating repeated cycles of substrate binding and release. Functions in collaboration with co-chaperones. Functions with the co-chaperone, DNLZ, to maintain solubility and regulate ATP hydrolysis. Nucleotide exchange factors, GRPEL1 and GRPEL2, accelerate nucleotide exchange. Mitochondrial chaperone that plays a key role in mitochondrial protein import, folding, and assembly. Plays an essential role in the protein quality control system, the correct folding of proteins, the re-folding of misfolded proteins, and the targeting of proteins for subsequent degradation. These processes are achieved through cycles of ATP binding, ATP hydrolysis, and ADP release, mediated by co-chaperones. In mitochondria, it associates with the TIM (translocase of the inner membrane) protein complex to assist in the import and folding of mitochondrial proteins. Plays an important role in mitochondrial iron-sulfur cluster (ISC) biogenesis, interacts with and stabilizes ISC cluster assembly proteins FXN, NFU1, NFS1 and ISCU. Regulates erythropoiesis via stabilization of ISC assembly. Regulates mitochondrial calcium-dependent apoptosis by coupling two calcium channels, ITPR1 and VDAC1, at the mitochondria-associated endoplasmic reticulum (ER) membrane to facilitate calcium transport from the ER lumen to the mitochondria intermembrane space, providing calcium for the downstream calcium channel MCU, which releases it into the mitochondrial matrix. Although primarily located in the mitochondria, it is also found in other cellular compartments. In the cytosol, it associates with proteins involved in signaling, apoptosis, or senescence. It may play a role in cell cycle regulation via its interaction with and promotion of degradation of TP53. May play a role in the control of cell proliferation and cellular aging. Protects against reactive oxygen species (ROS). Extracellular HSPA9 plays a cytoprotective role by preventing cell lysis following immune attack by the membrane attack complex by disrupting formation of the complex. The sequence is that of Stress-70 protein, mitochondrial from Bos taurus (Bovine).